A 260-amino-acid polypeptide reads, in one-letter code: Imidazole glycerol phosphate synthase subunit HisF (260 aa).

Active-site residues include Asp11 and Asp130.

Belongs to the HisA/HisF family. In terms of assembly, heterodimer of HisH and HisF.

It is found in the cytoplasm. The catalysed reaction is 5-[(5-phospho-1-deoxy-D-ribulos-1-ylimino)methylamino]-1-(5-phospho-beta-D-ribosyl)imidazole-4-carboxamide + L-glutamine = D-erythro-1-(imidazol-4-yl)glycerol 3-phosphate + 5-amino-1-(5-phospho-beta-D-ribosyl)imidazole-4-carboxamide + L-glutamate + H(+). The protein operates within amino-acid biosynthesis; L-histidine biosynthesis; L-histidine from 5-phospho-alpha-D-ribose 1-diphosphate: step 5/9. IGPS catalyzes the conversion of PRFAR and glutamine to IGP, AICAR and glutamate. The HisF subunit catalyzes the cyclization activity that produces IGP and AICAR from PRFAR using the ammonia provided by the HisH subunit. This is Imidazole glycerol phosphate synthase subunit HisF from Endomicrobium trichonymphae.